Here is a 623-residue protein sequence, read N- to C-terminus: 1-deoxy-D-xylulose-5-phosphate synthase (623 aa).

Thiamine diphosphate is bound by residues histidine 80 and glycine 121–serine 123. Aspartate 152 is a Mg(2+) binding site. Residues glycine 153–alanine 154, asparagine 181, tyrosine 289, and glutamate 372 each bind thiamine diphosphate. Asparagine 181 contributes to the Mg(2+) binding site.

It belongs to the transketolase family. DXPS subfamily. In terms of assembly, homodimer. It depends on Mg(2+) as a cofactor. The cofactor is thiamine diphosphate.

It catalyses the reaction D-glyceraldehyde 3-phosphate + pyruvate + H(+) = 1-deoxy-D-xylulose 5-phosphate + CO2. It functions in the pathway metabolic intermediate biosynthesis; 1-deoxy-D-xylulose 5-phosphate biosynthesis; 1-deoxy-D-xylulose 5-phosphate from D-glyceraldehyde 3-phosphate and pyruvate: step 1/1. In terms of biological role, catalyzes the acyloin condensation reaction between C atoms 2 and 3 of pyruvate and glyceraldehyde 3-phosphate to yield 1-deoxy-D-xylulose-5-phosphate (DXP). In Baumannia cicadellinicola subsp. Homalodisca coagulata, this protein is 1-deoxy-D-xylulose-5-phosphate synthase.